Here is a 190-residue protein sequence, read N- to C-terminus: MSFEELWQKNPMLKPRIEKVVVNFGVGESGDRLTKGAQVIEELTGQKPIRTRAKQTNPSFGIRKKLPIGLKVTLRGKKAEEFLKNAFEAFQKEGKKLYDYSFDDYGNFSFGIHEHIDFPGQKYDPMIGIFGMDVCVTLERPGFRVKRRKRCRAKIPRRHRLTREEAIEFIEKTFGVKVERVLLEEEEETQ.

This sequence belongs to the universal ribosomal protein uL5 family. Part of the 50S ribosomal subunit; contacts the 5S rRNA and probably tRNA. Forms a bridge to the 30S subunit in the 70S ribosome.

In terms of biological role, this is one of the proteins that bind and probably mediate the attachment of the 5S RNA into the large ribosomal subunit, where it forms part of the central protuberance. In the 70S ribosome it contacts protein S13 of the 30S subunit (bridge B1b), connecting the 2 subunits; this bridge is implicated in subunit movement. May contact the P site tRNA; the 5S rRNA and some of its associated proteins might help stabilize positioning of ribosome-bound tRNAs. The polypeptide is Large ribosomal subunit protein uL5 (Methanocaldococcus jannaschii (strain ATCC 43067 / DSM 2661 / JAL-1 / JCM 10045 / NBRC 100440) (Methanococcus jannaschii)).